Consider the following 90-residue polypeptide: Small ribosomal subunit protein bS16 (90 aa).

Belongs to the bacterial ribosomal protein bS16 family.

This is Small ribosomal subunit protein bS16 from Anoxybacillus flavithermus (strain DSM 21510 / WK1).